The chain runs to 184 residues: Shikimate kinase (184 aa).

Residue 20 to 25 (GVGKSR) participates in ATP binding. Position 24 (serine 24) interacts with Mg(2+). Aspartate 42, arginine 66, and glycine 88 together coordinate substrate. Arginine 127 lines the ATP pocket. Arginine 146 is a binding site for substrate. An ATP-binding site is contributed by arginine 162.

This sequence belongs to the shikimate kinase family. As to quaternary structure, monomer. The cofactor is Mg(2+).

It localises to the cytoplasm. The enzyme catalyses shikimate + ATP = 3-phosphoshikimate + ADP + H(+). The protein operates within metabolic intermediate biosynthesis; chorismate biosynthesis; chorismate from D-erythrose 4-phosphate and phosphoenolpyruvate: step 5/7. Its function is as follows. Catalyzes the specific phosphorylation of the 3-hydroxyl group of shikimic acid using ATP as a cosubstrate. The polypeptide is Shikimate kinase (Thermus thermophilus (strain ATCC 27634 / DSM 579 / HB8)).